The sequence spans 80 residues: DNA-directed RNA polymerase subunit Rpo5 (80 aa).

This sequence belongs to the archaeal Rpo5/eukaryotic RPB5 RNA polymerase subunit family. As to quaternary structure, part of the RNA polymerase complex.

It localises to the cytoplasm. It carries out the reaction RNA(n) + a ribonucleoside 5'-triphosphate = RNA(n+1) + diphosphate. In terms of biological role, DNA-dependent RNA polymerase (RNAP) catalyzes the transcription of DNA into RNA using the four ribonucleoside triphosphates as substrates. The protein is DNA-directed RNA polymerase subunit Rpo5 of Thermofilum pendens (strain DSM 2475 / Hrk 5).